Reading from the N-terminus, the 187-residue chain is Protein GrpE (187 aa).

Positions 1–26 (MHDPKESLETNIQETESQEKLPETPI) are disordered.

The protein belongs to the GrpE family. In terms of assembly, homodimer.

The protein resides in the cytoplasm. Participates actively in the response to hyperosmotic and heat shock by preventing the aggregation of stress-denatured proteins, in association with DnaK and GrpE. It is the nucleotide exchange factor for DnaK and may function as a thermosensor. Unfolded proteins bind initially to DnaJ; upon interaction with the DnaJ-bound protein, DnaK hydrolyzes its bound ATP, resulting in the formation of a stable complex. GrpE releases ADP from DnaK; ATP binding to DnaK triggers the release of the substrate protein, thus completing the reaction cycle. Several rounds of ATP-dependent interactions between DnaJ, DnaK and GrpE are required for fully efficient folding. This chain is Protein GrpE, found in Dichelobacter nodosus (strain VCS1703A).